Consider the following 166-residue polypeptide: Small ribosomal subunit protein uS5 (166 aa).

The S5 DRBM domain maps to 11 to 74 (LQEKLISVNR…DKARKNMIII (64 aa)).

Belongs to the universal ribosomal protein uS5 family. As to quaternary structure, part of the 30S ribosomal subunit. Contacts proteins S4 and S8.

Its function is as follows. With S4 and S12 plays an important role in translational accuracy. In terms of biological role, located at the back of the 30S subunit body where it stabilizes the conformation of the head with respect to the body. The sequence is that of Small ribosomal subunit protein uS5 from Wigglesworthia glossinidia brevipalpis.